The primary structure comprises 504 residues: Arabinose import ATP-binding protein AraG (504 aa).

ABC transporter domains follow at residues 8 to 243 and 256 to 499; these read LSFR…MVGR and YGEE…MPKV. 40-47 provides a ligand contact to ATP; that stretch reads GENGAGKS.

This sequence belongs to the ABC transporter superfamily. Arabinose importer (TC 3.A.1.2.2) family. In terms of assembly, the complex is composed of two ATP-binding proteins (AraG), two transmembrane proteins (AraH) and a solute-binding protein (AraF).

The protein resides in the cell inner membrane. The enzyme catalyses L-arabinose(out) + ATP + H2O = L-arabinose(in) + ADP + phosphate + H(+). Part of the ABC transporter complex AraFGH involved in arabinose import. Responsible for energy coupling to the transport system. The sequence is that of Arabinose import ATP-binding protein AraG from Shigella boydii serotype 4 (strain Sb227).